A 128-amino-acid polypeptide reads, in one-letter code: Anion exchange transporter (128 aa).

Residues 1–14 (LFSFKELNEQFKRK) lie on the Extracellular side of the membrane. A helical transmembrane segment spans residues 15–35 (IKVVLPVDLVLIIAASFACYC). Topologically, residues 36–66 (TNMENTYGLEVVGHIPRGIPPPRAPPMNILS) are cytoplasmic. The chain crosses the membrane as a helical span at residues 67 to 87 (AVITEAFGVALVGYAASLALA). Residues 88–103 (QGSAKKFKYSVDDNQE) lie on the Extracellular side of the membrane. A helical membrane pass occupies residues 104–124 (FLAHGLSNVISSFLFCIPSAA). At 125-128 (AMGR) the chain is on the cytoplasmic side.

Belongs to the SLC26A/SulP transporter (TC 2.A.53) family. Expressed in gastric epithelium, predominantly in the gastric parietal cells but also at lower levels in mucosal cells.

Its subcellular location is the basolateral cell membrane. The protein resides in the recycling endosome membrane. The protein localises to the apical cell membrane. It localises to the lateral cell membrane. The catalysed reaction is chloride(in) = chloride(out). It carries out the reaction iodide(out) = iodide(in). It catalyses the reaction bromide(in) = bromide(out). The enzyme catalyses oxalate(in) = oxalate(out). The catalysed reaction is nitrate(in) = nitrate(out). It carries out the reaction sulfate(in) = sulfate(out). It catalyses the reaction D-gluconate(in) = D-gluconate(out). The enzyme catalyses thiocyanate(in) = thiocyanate(out). The catalysed reaction is hydrogencarbonate(in) = hydrogencarbonate(out). It carries out the reaction hydrogencarbonate(in) + chloride(out) = hydrogencarbonate(out) + chloride(in). Its function is as follows. Acts as an anion channel mediating the transport of chloride, bromide, iodide, nitrate, sulfate, gluconate, thiocyanate, oxalate and bicarbonate ions. Its permeability towards bicarbonate is weak and increases when pH is above 7. Mediates thiocyanate transport in retinal pigment epithelium cells. Mediates iodide transport in the thyroid gland, playing an important role in the synthesis of thyroid hormones and the maintenance of thyroid function. The protein is Anion exchange transporter of Oryctolagus cuniculus (Rabbit).